Here is a 350-residue protein sequence, read N- to C-terminus: Phosphotriesterase-related protein (350 aa).

The a divalent metal cation site is built by H22, H24, E169, H201, H230, and D298.

This sequence belongs to the metallo-dependent hydrolases superfamily. Phosphotriesterase family. Requires a divalent metal cation as cofactor.

The protein is Phosphotriesterase-related protein of Drosophila sechellia (Fruit fly).